The primary structure comprises 463 residues: Succinate--CoA ligase [ADP-forming] subunit beta, mitochondrial (463 aa).

The N-terminal 53 residues, 1 to 53 (MAASMFYGRQLAAAALRSHRPQTTLRAAAQVLGNSGLFNKHGLQVQQQQQRTL), are a transit peptide targeting the mitochondrion. The 228-residue stretch at 61–288 (MELLQEAGVS…SNSAYRQKKI (228 aa)) folds into the ATP-grasp domain. Residue lysine 78 is modified to N6-acetyllysine. Tyrosine 84 bears the Phosphotyrosine mark. Lysine 88 carries the post-translational modification N6-acetyllysine; alternate. The residue at position 88 (lysine 88) is an N6-succinyllysine; alternate. ATP-binding positions include lysine 98 and 105–107 (GRG). N6-acetyllysine occurs at positions 129, 139, 143, and 216. The Mg(2+) site is built by asparagine 258 and aspartate 272. Serine 279 bears the Phosphoserine mark. Asparagine 323 is a substrate binding site. Threonine 341 carries the phosphothreonine modification. Lysine 368 carries the N6-acetyllysine modification. Residue 380 to 382 (GIM) participates in substrate binding. At lysine 438 the chain carries N6-acetyllysine.

This sequence belongs to the succinate/malate CoA ligase beta subunit family. ATP-specific subunit beta subfamily. As to quaternary structure, heterodimer of an alpha and a beta subunit. The beta subunit determines specificity for ATP. Interacts with ALAS2. Mg(2+) is required as a cofactor.

The protein resides in the mitochondrion. The enzyme catalyses succinate + ATP + CoA = succinyl-CoA + ADP + phosphate. The protein operates within carbohydrate metabolism; tricarboxylic acid cycle; succinate from succinyl-CoA (ligase route): step 1/1. Its function is as follows. ATP-specific succinyl-CoA synthetase functions in the citric acid cycle (TCA), coupling the hydrolysis of succinyl-CoA to the synthesis of ATP and thus represents the only step of substrate-level phosphorylation in the TCA. The beta subunit provides nucleotide specificity of the enzyme and binds the substrate succinate, while the binding sites for coenzyme A and phosphate are found in the alpha subunit. This chain is Succinate--CoA ligase [ADP-forming] subunit beta, mitochondrial, found in Mus musculus (Mouse).